The following is a 394-amino-acid chain: Elongation factor Tu (394 aa).

The 195-residue stretch at 10–204 folds into the tr-type G domain; it reads KPHINIGTIG…AVDDNIPTPE (195 aa). Positions 19–26 are G1; it reads GHVDHGKT. 19–26 is a binding site for GTP; sequence GHVDHGKT. Thr-26 is a Mg(2+) binding site. The interval 60–64 is G2; sequence GITIN. The G3 stretch occupies residues 81-84; that stretch reads DCPG. Residues 81 to 85 and 136 to 139 contribute to the GTP site; these read DCPGH and NKID. A G4 region spans residues 136–139; that stretch reads NKID. The segment at 174–176 is G5; it reads SAL.

This sequence belongs to the TRAFAC class translation factor GTPase superfamily. Classic translation factor GTPase family. EF-Tu/EF-1A subfamily. In terms of assembly, monomer.

The protein resides in the cytoplasm. The catalysed reaction is GTP + H2O = GDP + phosphate + H(+). GTP hydrolase that promotes the GTP-dependent binding of aminoacyl-tRNA to the A-site of ribosomes during protein biosynthesis. This chain is Elongation factor Tu, found in Chlamydia trachomatis serovar L2 (strain ATCC VR-902B / DSM 19102 / 434/Bu).